Consider the following 204-residue polypeptide: Acyl-homoserine-lactone synthase (204 aa).

It belongs to the autoinducer synthase family.

It carries out the reaction a fatty acyl-[ACP] + S-adenosyl-L-methionine = an N-acyl-L-homoserine lactone + S-methyl-5'-thioadenosine + holo-[ACP] + H(+). Functionally, required for the synthesis of acyl-HSL autoinducers that bind to SolR. The sequence is that of Acyl-homoserine-lactone synthase (solI) from Ralstonia solanacearum (Pseudomonas solanacearum).